Consider the following 357-residue polypeptide: Biotin synthase (357 aa).

The interval 1 to 27 (MTTAETKPATETGENAGTTGTAGTAAT) is disordered. The segment covering 9 to 27 (ATETGENAGTTGTAGTAAT) has biased composition (low complexity). One can recognise a Radical SAM core domain in the interval 78–303 (DAVEMEGIIS…RQLLRFAGGR (226 aa)). Cysteine 93, cysteine 97, and cysteine 100 together coordinate [4Fe-4S] cluster. Cysteine 136, cysteine 228, and arginine 298 together coordinate [2Fe-2S] cluster.

The protein belongs to the radical SAM superfamily. Biotin synthase family. Homodimer. The cofactor is [4Fe-4S] cluster. Requires [2Fe-2S] cluster as cofactor.

The enzyme catalyses (4R,5S)-dethiobiotin + (sulfur carrier)-SH + 2 reduced [2Fe-2S]-[ferredoxin] + 2 S-adenosyl-L-methionine = (sulfur carrier)-H + biotin + 2 5'-deoxyadenosine + 2 L-methionine + 2 oxidized [2Fe-2S]-[ferredoxin]. Its pathway is cofactor biosynthesis; biotin biosynthesis; biotin from 7,8-diaminononanoate: step 2/2. Catalyzes the conversion of dethiobiotin (DTB) to biotin by the insertion of a sulfur atom into dethiobiotin via a radical-based mechanism. This Corynebacterium jeikeium (strain K411) protein is Biotin synthase.